The following is a 1057-amino-acid chain: DNA-directed RNA polymerase subunit beta' (1057 aa).

Zn(2+) is bound by residues cysteine 60, cysteine 62, cysteine 75, and cysteine 78. 3 residues coordinate Mg(2+): aspartate 449, aspartate 451, and aspartate 453. Cysteine 822, cysteine 896, cysteine 903, and cysteine 906 together coordinate Zn(2+).

The protein belongs to the RNA polymerase beta' chain family. In terms of assembly, the RNAP catalytic core consists of 2 alpha, 1 beta, 1 beta' and 1 omega subunit. When a sigma factor is associated with the core the holoenzyme is formed, which can initiate transcription. Mg(2+) is required as a cofactor. Zn(2+) serves as cofactor.

It carries out the reaction RNA(n) + a ribonucleoside 5'-triphosphate = RNA(n+1) + diphosphate. Functionally, DNA-dependent RNA polymerase catalyzes the transcription of DNA into RNA using the four ribonucleoside triphosphates as substrates. The sequence is that of DNA-directed RNA polymerase subunit beta' from Staphylococcus aureus.